A 192-amino-acid chain; its full sequence is Molybdenum cofactor guanylyltransferase (192 aa).

GTP-binding positions include 10–12, Lys-23, Asn-51, Asp-69, and Asp-99; that span reads LAG. Asp-99 provides a ligand contact to Mg(2+).

This sequence belongs to the MobA family. As to quaternary structure, monomer. It depends on Mg(2+) as a cofactor.

The protein localises to the cytoplasm. It catalyses the reaction Mo-molybdopterin + GTP + H(+) = Mo-molybdopterin guanine dinucleotide + diphosphate. Transfers a GMP moiety from GTP to Mo-molybdopterin (Mo-MPT) cofactor (Moco or molybdenum cofactor) to form Mo-molybdopterin guanine dinucleotide (Mo-MGD) cofactor. The protein is Molybdenum cofactor guanylyltransferase of Haemophilus influenzae (strain ATCC 51907 / DSM 11121 / KW20 / Rd).